Reading from the N-terminus, the 65-residue chain is Excisionase (65 aa).

Residues 45 to 65 form a disordered region; the sequence is GNPNRWRSESIKEWEDKKKIN. Basic and acidic residues predominate over residues 50–65; the sequence is WRSESIKEWEDKKKIN.

Its function is as follows. Excisionase and integrase are necessary for the excision of prophage from the host genome by site-specific recombination at the att site. The polypeptide is Excisionase (xis) (Escherichia coli (Bacteriophage phi-80)).